The following is a 299-amino-acid chain: 4-hydroxybenzoate octaprenyltransferase (299 aa).

The next 8 membrane-spanning stretches (helical) occupy residues 33-53 (VGFLLLLWPTWWALWLAADGV), 56-76 (WWTLCVFTTGIWLTRSAGCVI), 105-125 (NALLMFGTLMLIAFGLVLTMN), 151-171 (LPQVYLGIAFGWGIPMAFAAI), 180-200 (WLLYVANILWTTAYDTWYAMV), 214-234 (AILFADLDLVVQGVLYTLMLL), 247-267 (HTYWISLISAVALIGYQFIIA), and 278-298 (AFMHNNWVGMTIFAGIALATT).

This sequence belongs to the UbiA prenyltransferase family. It depends on Mg(2+) as a cofactor.

Its subcellular location is the cell inner membrane. The catalysed reaction is all-trans-octaprenyl diphosphate + 4-hydroxybenzoate = 4-hydroxy-3-(all-trans-octaprenyl)benzoate + diphosphate. The protein operates within cofactor biosynthesis; ubiquinone biosynthesis. Catalyzes the prenylation of para-hydroxybenzoate (PHB) with an all-trans polyprenyl group. Mediates the second step in the final reaction sequence of ubiquinone-8 (UQ-8) biosynthesis, which is the condensation of the polyisoprenoid side chain with PHB, generating the first membrane-bound Q intermediate 3-octaprenyl-4-hydroxybenzoate. This Xylella fastidiosa (strain M23) protein is 4-hydroxybenzoate octaprenyltransferase.